We begin with the raw amino-acid sequence, 608 residues long: Glutamine--fructose-6-phosphate aminotransferase [isomerizing] (608 aa).

Cys2 serves as the catalytic Nucleophile; for GATase activity. A Glutamine amidotransferase type-2 domain is found at Cys2 to Thr217. SIS domains lie at Ile281–Thr422 and Leu456–Pro598. Catalysis depends on Lys603, which acts as the For Fru-6P isomerization activity.

The protein resides in the cytoplasm. The catalysed reaction is D-fructose 6-phosphate + L-glutamine = D-glucosamine 6-phosphate + L-glutamate. Functionally, involved in the production of the root hair deformation (HAD) factor specifically on medicago. This chain is Glutamine--fructose-6-phosphate aminotransferase [isomerizing] (nodM), found in Rhizobium meliloti (strain 1021) (Ensifer meliloti).